The sequence spans 116 residues: Aspartate 1-decarboxylase (116 aa).

S25 functions as the Schiff-base intermediate with substrate; via pyruvic acid in the catalytic mechanism. S25 carries the post-translational modification Pyruvic acid (Ser). T57 contributes to the substrate binding site. Y58 serves as the catalytic Proton donor. 73–75 (GAA) contacts substrate.

Belongs to the PanD family. Heterooctamer of four alpha and four beta subunits. It depends on pyruvate as a cofactor. Is synthesized initially as an inactive proenzyme, which is activated by self-cleavage at a specific serine bond to produce a beta-subunit with a hydroxyl group at its C-terminus and an alpha-subunit with a pyruvoyl group at its N-terminus.

It localises to the cytoplasm. It carries out the reaction L-aspartate + H(+) = beta-alanine + CO2. Its pathway is cofactor biosynthesis; (R)-pantothenate biosynthesis; beta-alanine from L-aspartate: step 1/1. Its function is as follows. Catalyzes the pyruvoyl-dependent decarboxylation of aspartate to produce beta-alanine. In Parabacteroides distasonis (strain ATCC 8503 / DSM 20701 / CIP 104284 / JCM 5825 / NCTC 11152), this protein is Aspartate 1-decarboxylase.